We begin with the raw amino-acid sequence, 290 residues long: 4-hydroxybenzoate octaprenyltransferase (290 aa).

8 helical membrane-spanning segments follow: residues 23–43 (IGALLLLWPTLWALWVATPGV), 46–66 (LWIMAVFVAGVWLMRAAGCVV), 99–119 (LFVVLVLISFLLVLTLNTMTI), 141–161 (LPQVVLGAAFGWSIPMAFAAV), 163–183 (ESVPLSCWLMFLANILWAVAY), 213–233 (LIIGILQIGVLALMAIIGELN), 234–254 (GLGWGYYWSIVVAGALFVYQQ), and 268–288 (AFMNNNYVGLVLFLGLAMSYW).

It belongs to the UbiA prenyltransferase family. It depends on Mg(2+) as a cofactor.

The protein resides in the cell inner membrane. It catalyses the reaction all-trans-octaprenyl diphosphate + 4-hydroxybenzoate = 4-hydroxy-3-(all-trans-octaprenyl)benzoate + diphosphate. Its pathway is cofactor biosynthesis; ubiquinone biosynthesis. Functionally, catalyzes the prenylation of para-hydroxybenzoate (PHB) with an all-trans polyprenyl group. Mediates the second step in the final reaction sequence of ubiquinone-8 (UQ-8) biosynthesis, which is the condensation of the polyisoprenoid side chain with PHB, generating the first membrane-bound Q intermediate 3-octaprenyl-4-hydroxybenzoate. The sequence is that of 4-hydroxybenzoate octaprenyltransferase from Shigella flexneri.